Here is a 273-residue protein sequence, read N- to C-terminus: Phosphate import ATP-binding protein PstB (273 aa).

An ABC transporter domain is found at 27 to 268 (VTVRDLNFYY…PSDRRTQDYI (242 aa)). Residue 59 to 66 (GPSGCGKS) coordinates ATP.

Belongs to the ABC transporter superfamily. Phosphate importer (TC 3.A.1.7) family. As to quaternary structure, the complex is composed of two ATP-binding proteins (PstB), two transmembrane proteins (PstC and PstA) and a solute-binding protein (PstS).

The protein resides in the cell inner membrane. It carries out the reaction phosphate(out) + ATP + H2O = ADP + 2 phosphate(in) + H(+). Its function is as follows. Part of the ABC transporter complex PstSACB involved in phosphate import. Responsible for energy coupling to the transport system. The sequence is that of Phosphate import ATP-binding protein PstB from Rhodopseudomonas palustris (strain ATCC BAA-98 / CGA009).